A 242-amino-acid polypeptide reads, in one-letter code: Ubiquinone biosynthesis O-methyltransferase (242 aa).

Residues arginine 44, glycine 64, aspartate 85, and methionine 129 each coordinate S-adenosyl-L-methionine.

It belongs to the methyltransferase superfamily. UbiG/COQ3 family.

It carries out the reaction a 3-demethylubiquinol + S-adenosyl-L-methionine = a ubiquinol + S-adenosyl-L-homocysteine + H(+). The catalysed reaction is a 3-(all-trans-polyprenyl)benzene-1,2-diol + S-adenosyl-L-methionine = a 2-methoxy-6-(all-trans-polyprenyl)phenol + S-adenosyl-L-homocysteine + H(+). It participates in cofactor biosynthesis; ubiquinone biosynthesis. O-methyltransferase that catalyzes the 2 O-methylation steps in the ubiquinone biosynthetic pathway. In Yersinia enterocolitica serotype O:8 / biotype 1B (strain NCTC 13174 / 8081), this protein is Ubiquinone biosynthesis O-methyltransferase.